The chain runs to 333 residues: Biotin synthase (333 aa).

Residues 47 to 276 enclose the Radical SAM core domain; it reads YYGKKVKLNM…TKEIRISGGR (230 aa). Positions 65, 69, and 72 each coordinate [4Fe-4S] cluster. [2Fe-2S] cluster-binding residues include C109, C141, C201, and R271.

It belongs to the radical SAM superfamily. Biotin synthase family. In terms of assembly, homodimer. It depends on [4Fe-4S] cluster as a cofactor. [2Fe-2S] cluster is required as a cofactor.

It carries out the reaction (4R,5S)-dethiobiotin + (sulfur carrier)-SH + 2 reduced [2Fe-2S]-[ferredoxin] + 2 S-adenosyl-L-methionine = (sulfur carrier)-H + biotin + 2 5'-deoxyadenosine + 2 L-methionine + 2 oxidized [2Fe-2S]-[ferredoxin]. Its pathway is cofactor biosynthesis; biotin biosynthesis; biotin from 7,8-diaminononanoate: step 2/2. Catalyzes the conversion of dethiobiotin (DTB) to biotin by the insertion of a sulfur atom into dethiobiotin via a radical-based mechanism. This chain is Biotin synthase, found in Bacillus licheniformis (strain ATCC 14580 / DSM 13 / JCM 2505 / CCUG 7422 / NBRC 12200 / NCIMB 9375 / NCTC 10341 / NRRL NRS-1264 / Gibson 46).